A 213-amino-acid polypeptide reads, in one-letter code: Major fimbrial subunit (213 aa).

Residues Met1–Ala20 form the signal peptide. Cys41 and Cys81 are joined by a disulfide.

The protein belongs to the fimbrial protein family.

The protein resides in the fimbrium. In terms of biological role, mediates adherence to oropharyngeal epithelial cells. Helps the airway colonization process. The sequence is that of Major fimbrial subunit (hifA) from Haemophilus influenzae.